The sequence spans 801 residues: Heavy metal tolerance factor 1 (801 aa).

The Lumenal segment spans residues 1–24; that stretch reads MGFSPFLDECRAEGLWPIGPSCNK. A helical transmembrane segment spans residues 25 to 45; the sequence is IISFGVYTFFIVVNFIVLCIP. Over 46 to 75 the chain is Cytoplasmic; sequence NSNSANNNYRRMTDDDASSTSKLTISKILS. Residues 76-96 form a helical membrane-spanning segment; sequence ICTIFAVICQSIFYFCFTFYF. Residues 97–101 are Lumenal-facing; that stretch reads HPYTH. A helical membrane pass occupies residues 102 to 122; the sequence is LLLAFCVSKLFFWILSLCSFS. At 123 to 129 the chain is on the cytoplasmic side; sequence KWRNQPS. A helical membrane pass occupies residues 130 to 150; it reads TPISLAFAFSAALLIHCIPLT. At 151–167 the chain is on the lumenal side; it reads DWKKYFEPTSKNRGDLT. The chain crosses the membrane as a helical span at residues 168 to 188; sequence FYIIELALVTVVFFFTIVTGL. Residues 189 to 226 are Cytoplasmic-facing; sequence FNFSGCSSRESAWNNLSKKVVTVAPYIWPTKSISLQLR. A helical membrane pass occupies residues 227–247; it reads VVFCLFLLIIGRLINVSLPIL. The 290-residue stretch at 227–516 folds into the ABC transmembrane type-1 domain; that stretch reads VVFCLFLLII…FGTIYRVIQK (290 aa). The Lumenal segment spans residues 248-264; it reads SKWIVDELATPDTFQYS. A helical membrane pass occupies residues 265–285; sequence LLFLATFLKFLQGNGAMGGFL. The Cytoplasmic portion of the chain corresponds to 286 to 341; that stretch reads NTVRTYLWIPIQQYTTRELEVELFKHLHSLSLRWHLSRKTGQVLRVMDRGTSSVNN. A helical transmembrane segment spans residues 342-364; sequence ILNYILFNVVPTIADIVIAVIFF. Residues 365–371 are Lumenal-facing; it reads FSAFNAY. The chain crosses the membrane as a helical span at residues 372 to 390; the sequence is FGLIVFGTMALYLTVTISI. Topologically, residues 391 to 461 are cytoplasmic; the sequence is TEWRTQYIRE…SLAFLNCLQN (71 aa). A helical membrane pass occupies residues 462 to 482; that stretch reads AIIGIGMIGGSVFVVYMIVHE. Over 483-489 the chain is Lumenal; the sequence is KTLTVGD. The chain crosses the membrane as a helical span at residues 490-510; sequence YVLFTTYLLQLYTPLNFFGTI. The Cytoplasmic portion of the chain corresponds to 511 to 801; it reads YRVIQKAFVD…KSIELGEELP (291 aa). An ABC transporter domain is found at 550 to 784; the sequence is ISVKNLTFEY…QGTYASMWEA (235 aa). 583 to 590 contacts ATP; sequence GSSGSGKS.

Belongs to the ABC transporter superfamily. ABCB family. Heavy Metal importer (TC 3.A.1.210) subfamily. As to expression, expressed in coelomocytes, as well as in head and tail neurons, and in the intestinal cells.

The protein resides in the vacuole membrane. Its subcellular location is the early endosome. It localises to the late endosome. The protein localises to the recycling endosome. Its function is as follows. May play a pivotal role in the detoxification of heavy metals such as cadmium but do not depend exclusively on phytochelatins (PC) synthesis. This Caenorhabditis elegans protein is Heavy metal tolerance factor 1.